An 87-amino-acid chain; its full sequence is Small cysteine-rich outer membrane protein omcA (87 aa).

A signal peptide spans 1-19; it reads MKKAVLLATVFCGVVGLTS. A lipid anchor (N-palmitoyl cysteine) is attached at Cys-20. Cys-20 carries S-diacylglycerol cysteine lipidation.

As to quaternary structure, part of a disulfide cross-linked outer membrane complex (COMC) composed of the major outer membrane porin (MOMP), the small cysteine-rich protein (omcA) and the large cysteine-rich periplasmic protein (omcB). In terms of processing, N-terminal amide-linked and S-diacylglycerol cysteine-linked to 16:0, 18:0, 15:0 branched, and 17:0 branched fatty acids (ratio 6:5:3:4) in the EB stage. The exact distribution of fatty acids has not been determined. Post-translationally, the N-terminus is blocked.

The protein resides in the cell outer membrane. Functionally, in elementary bodies (EBs, the infectious stage, which is able to survive outside the host cell) provides the structural integrity of the outer envelope through disulfide cross-links with the large cysteine-rich periplasmic protein and the major outer membrane porin. It has been described in publications as the Sarkosyl-insoluble COMC (Chlamydia outer membrane complex), and serves as the functional equivalent of peptidoglycan. The polypeptide is Small cysteine-rich outer membrane protein omcA (omcA) (Chlamydia psittaci (Chlamydophila psittaci)).